Consider the following 97-residue polypeptide: Co-chaperonin GroES (97 aa).

Belongs to the GroES chaperonin family. Heptamer of 7 subunits arranged in a ring. Interacts with the chaperonin GroEL.

The protein localises to the cytoplasm. Its function is as follows. Together with the chaperonin GroEL, plays an essential role in assisting protein folding. The GroEL-GroES system forms a nano-cage that allows encapsulation of the non-native substrate proteins and provides a physical environment optimized to promote and accelerate protein folding. GroES binds to the apical surface of the GroEL ring, thereby capping the opening of the GroEL channel. This is Co-chaperonin GroES from Gemmatimonas aurantiaca (strain DSM 14586 / JCM 11422 / NBRC 100505 / T-27).